A 161-amino-acid polypeptide reads, in one-letter code: Cyclic pyranopterin monophosphate synthase (161 aa).

Substrate is bound by residues 75-77 (LCH) and 113-114 (ME). Residue aspartate 128 is part of the active site.

Belongs to the MoaC family. Homohexamer; trimer of dimers.

It catalyses the reaction (8S)-3',8-cyclo-7,8-dihydroguanosine 5'-triphosphate = cyclic pyranopterin phosphate + diphosphate. The protein operates within cofactor biosynthesis; molybdopterin biosynthesis. In terms of biological role, catalyzes the conversion of (8S)-3',8-cyclo-7,8-dihydroguanosine 5'-triphosphate to cyclic pyranopterin monophosphate (cPMP). This chain is Cyclic pyranopterin monophosphate synthase, found in Cronobacter sakazakii (strain ATCC BAA-894) (Enterobacter sakazakii).